A 393-amino-acid polypeptide reads, in one-letter code: Upstream-binding factor 1-like protein 1 (393 aa).

DNA-binding regions (HMG box) lie at residues 100 to 168 and 222 to 288; these read PKRP…ARFR and QKPP…DLWL. The interval 308–393 is disordered; it reads KNMAMTGGPD…SSGEEIEVDV (86 aa). A compositionally biased stretch (basic and acidic residues) spans 365–377; the sequence is EENRKKDREKEES.

Its subcellular location is the cytoplasm. The protein localises to the nucleus. Its function is as follows. Essential for proliferation of the inner cell mass and trophectodermal cells in peri-implantation development. The polypeptide is Upstream-binding factor 1-like protein 1 (Homo sapiens (Human)).